Consider the following 179-residue polypeptide: ATP synthase subunit delta (179 aa).

The protein belongs to the ATPase delta chain family. F-type ATPases have 2 components, F(1) - the catalytic core - and F(0) - the membrane proton channel. F(1) has five subunits: alpha(3), beta(3), gamma(1), delta(1), epsilon(1). F(0) has three main subunits: a(1), b(2) and c(10-14). The alpha and beta chains form an alternating ring which encloses part of the gamma chain. F(1) is attached to F(0) by a central stalk formed by the gamma and epsilon chains, while a peripheral stalk is formed by the delta and b chains.

The protein resides in the cell inner membrane. F(1)F(0) ATP synthase produces ATP from ADP in the presence of a proton or sodium gradient. F-type ATPases consist of two structural domains, F(1) containing the extramembraneous catalytic core and F(0) containing the membrane proton channel, linked together by a central stalk and a peripheral stalk. During catalysis, ATP synthesis in the catalytic domain of F(1) is coupled via a rotary mechanism of the central stalk subunits to proton translocation. Functionally, this protein is part of the stalk that links CF(0) to CF(1). It either transmits conformational changes from CF(0) to CF(1) or is implicated in proton conduction. The protein is ATP synthase subunit delta of Acidithiobacillus ferridurans.